The following is a 121-amino-acid chain: Fluoride-specific ion channel FluC 1 (121 aa).

4 consecutive transmembrane segments (helical) span residues 3–23 (YLYIFVGGALGALIRFCLSML), 29–49 (IPLGTFVANLLGAFLMGSIGA), 67–87 (TGLLGALTTFSTFQFELVTLF), and 92–112 (FILFTIYGVTSYILGILSCYL). Residues G71 and T74 each coordinate Na(+).

The protein belongs to the fluoride channel Fluc/FEX (TC 1.A.43) family.

Its subcellular location is the cell membrane. The enzyme catalyses fluoride(in) = fluoride(out). Its activity is regulated as follows. Na(+) is not transported, but it plays an essential structural role and its presence is essential for fluoride channel function. Its function is as follows. Fluoride-specific ion channel. Important for reducing fluoride concentration in the cell, thus reducing its toxicity. The sequence is that of Fluoride-specific ion channel FluC 1 from Staphylococcus epidermidis (strain ATCC 35984 / DSM 28319 / BCRC 17069 / CCUG 31568 / BM 3577 / RP62A).